The following is a 351-amino-acid chain: Methionine import ATP-binding protein MetN (351 aa).

Residues 2–241 form the ABC transporter domain; it reads IELRNVTKTY…PKTEIAKKFT (240 aa). 38–45 contributes to the ATP binding site; sequence GKSGAGKS.

Belongs to the ABC transporter superfamily. Methionine importer (TC 3.A.1.24) family. As to quaternary structure, the complex is composed of two ATP-binding proteins (MetN), two transmembrane proteins (MetI) and a solute-binding protein (MetQ).

Its subcellular location is the cell inner membrane. The enzyme catalyses L-methionine(out) + ATP + H2O = L-methionine(in) + ADP + phosphate + H(+). It carries out the reaction D-methionine(out) + ATP + H2O = D-methionine(in) + ADP + phosphate + H(+). Functionally, part of the ABC transporter complex MetNIQ involved in methionine import. Responsible for energy coupling to the transport system. The protein is Methionine import ATP-binding protein MetN of Coxiella burnetii (strain RSA 493 / Nine Mile phase I).